The chain runs to 97 residues: Putative ankyrin repeat protein RBE_0357 (97 aa).

The stretch at 24 to 54 is one ANK repeat; sequence YGKTALHYAYTKRNIDIIKILLKCPGIKICI.

In Rickettsia bellii (strain RML369-C), this protein is Putative ankyrin repeat protein RBE_0357.